Here is a 337-residue protein sequence, read N- to C-terminus: 4-hydroxythreonine-4-phosphate dehydrogenase (337 aa).

Substrate contacts are provided by His-138 and Thr-139. A divalent metal cation is bound by residues His-168, His-212, and His-267. Substrate contacts are provided by Lys-275, Asn-284, and Arg-293.

It belongs to the PdxA family. As to quaternary structure, homodimer. Zn(2+) serves as cofactor. It depends on Mg(2+) as a cofactor. Co(2+) is required as a cofactor.

The protein resides in the cytoplasm. The enzyme catalyses 4-(phosphooxy)-L-threonine + NAD(+) = 3-amino-2-oxopropyl phosphate + CO2 + NADH. It participates in cofactor biosynthesis; pyridoxine 5'-phosphate biosynthesis; pyridoxine 5'-phosphate from D-erythrose 4-phosphate: step 4/5. Catalyzes the NAD(P)-dependent oxidation of 4-(phosphooxy)-L-threonine (HTP) into 2-amino-3-oxo-4-(phosphooxy)butyric acid which spontaneously decarboxylates to form 3-amino-2-oxopropyl phosphate (AHAP). This chain is 4-hydroxythreonine-4-phosphate dehydrogenase, found in Beijerinckia indica subsp. indica (strain ATCC 9039 / DSM 1715 / NCIMB 8712).